The following is a 224-amino-acid chain: 7-cyano-7-deazaguanine synthase (224 aa).

ATP is bound at residue 8-18 (LSGGMDSAAVI). 4 residues coordinate Zn(2+): C186, C196, C199, and C202.

It belongs to the QueC family. Zn(2+) serves as cofactor.

It carries out the reaction 7-carboxy-7-deazaguanine + NH4(+) + ATP = 7-cyano-7-deazaguanine + ADP + phosphate + H2O + H(+). Its pathway is purine metabolism; 7-cyano-7-deazaguanine biosynthesis. In terms of biological role, catalyzes the ATP-dependent conversion of 7-carboxy-7-deazaguanine (CDG) to 7-cyano-7-deazaguanine (preQ(0)). In Xanthomonas oryzae pv. oryzae (strain MAFF 311018), this protein is 7-cyano-7-deazaguanine synthase.